The primary structure comprises 151 residues: Ribosomal RNA large subunit methyltransferase H (151 aa).

S-adenosyl-L-methionine-binding positions include Leu-73, Gly-100, and 119-124 (LSKMTM).

Belongs to the RNA methyltransferase RlmH family. In terms of assembly, homodimer.

Its subcellular location is the cytoplasm. It carries out the reaction pseudouridine(1915) in 23S rRNA + S-adenosyl-L-methionine = N(3)-methylpseudouridine(1915) in 23S rRNA + S-adenosyl-L-homocysteine + H(+). Its function is as follows. Specifically methylates the pseudouridine at position 1915 (m3Psi1915) in 23S rRNA. The chain is Ribosomal RNA large subunit methyltransferase H from Campylobacter concisus (strain 13826).